A 326-amino-acid polypeptide reads, in one-letter code: Vitamin B12 import system permease protein BtuC (326 aa).

The next 9 membrane-spanning stretches (helical) occupy residues 15–35, 61–81, 88–108, 112–132, 146–166, 184–204, 240–260, 274–294, and 302–322; these read WLLC…CAGE, LAVL…QALF, PGLL…VLLG, LPNW…TLIL, LLAG…AIYF, GGVD…LLWI, GWMV…GLVI, VLLP…DIVA, and ELPI…WLLL.

Belongs to the binding-protein-dependent transport system permease family. FecCD subfamily. The complex is composed of two ATP-binding proteins (BtuD), two transmembrane proteins (BtuC) and a solute-binding protein (BtuF).

Its subcellular location is the cell inner membrane. In terms of biological role, part of the ABC transporter complex BtuCDF involved in vitamin B12 import. Involved in the translocation of the substrate across the membrane. This is Vitamin B12 import system permease protein BtuC from Shigella sonnei (strain Ss046).